Here is a 209-residue protein sequence, read N- to C-terminus: MIGLVGKKVGMTRIFTEDGVSIPVTVIEVEANRVTQVKDLANDGYRAIQVTTGAKKANRVTKPEAGHFAKAGVEAGRGLWEFRLADGEEFTVGQNISVELFADVKKVDVTGTSKGKGFAGTVKRWNFRTQDATHGNSLSHRVPGSIGQNQTPGKVFKGKKMAGQLGNERVTVQSLDVVRVDAERNLLLVKGAVPGATGSDLIVKPAVKA.

At glutamine 150 the chain carries N5-methylglutamine.

The protein belongs to the universal ribosomal protein uL3 family. In terms of assembly, part of the 50S ribosomal subunit. Forms a cluster with proteins L14 and L19. Methylated by PrmB.

Functionally, one of the primary rRNA binding proteins, it binds directly near the 3'-end of the 23S rRNA, where it nucleates assembly of the 50S subunit. The protein is Large ribosomal subunit protein uL3 of Klebsiella pneumoniae (strain 342).